The following is a 660-amino-acid chain: DNA mismatch repair protein MutL (660 aa).

Belongs to the DNA mismatch repair MutL/HexB family.

Its function is as follows. This protein is involved in the repair of mismatches in DNA. It is required for dam-dependent methyl-directed DNA mismatch repair. May act as a 'molecular matchmaker', a protein that promotes the formation of a stable complex between two or more DNA-binding proteins in an ATP-dependent manner without itself being part of a final effector complex. The protein is DNA mismatch repair protein MutL of Streptococcus equi subsp. equi (strain 4047).